The following is a 583-amino-acid chain: Sphingomyelin phosphodiesterase A (583 aa).

A signal peptide spans 1–21 (MKSIPIILLVLIGLLLASVYS). The 83-residue stretch at 51 to 133 (IQLSCDVCQI…GYFKICSATG (83 aa)) folds into the Saposin B-type domain. 3 disulfide bridges follow: Cys-55–Cys-129, Cys-58–Cys-123, and Cys-86–Cys-97. Asn-72 carries an N-linked (GlcNAc...) asparagine glycan. Asn-182 carries N-linked (GlcNAc...) asparagine glycosylation. 2 residues coordinate Zn(2+): Asp-193 and His-195. The cysteines at positions 214 and 229 are disulfide-linked. The Zn(2+) site is built by Asp-258 and Asn-298. N-linked (GlcNAc...) asparagine glycosylation occurs at Asn-377. Positions 401, 436, and 438 each coordinate Zn(2+). N-linked (GlcNAc...) asparagine glycans are attached at residues Asn-495, Asn-500, Asn-537, and Asn-547. Cys-567 and Cys-580 are oxidised to a cystine.

It belongs to the acid sphingomyelinase family. It depends on Zn(2+) as a cofactor.

The protein localises to the secreted. Converts sphingomyelin to ceramide. The sequence is that of Sphingomyelin phosphodiesterase A (sgmA) from Dictyostelium discoideum (Social amoeba).